Consider the following 150-residue polypeptide: Macrodomain Ter protein (150 aa).

Belongs to the MatP family. Homodimer.

It localises to the cytoplasm. Functionally, required for spatial organization of the terminus region of the chromosome (Ter macrodomain) during the cell cycle. Prevents early segregation of duplicated Ter macrodomains during cell division. Binds specifically to matS, which is a 13 bp signature motif repeated within the Ter macrodomain. The sequence is that of Macrodomain Ter protein from Shigella boydii serotype 18 (strain CDC 3083-94 / BS512).